A 66-amino-acid chain; its full sequence is Xenoxin-2 (66 aa).

Cystine bridges form between C3-C24, C17-C37, C43-C58, and C59-C64.

Expressed by the skin dorsal glands.

It localises to the secreted. Functionally, lacks alpha-neurotoxic activity, has apparently no antibacterial activity, nor anti-coagulant potency. The chain is Xenoxin-2 from Xenopus laevis (African clawed frog).